The primary structure comprises 403 residues: S-adenosylmethionine synthase (403 aa).

Position 16 (histidine 16) interacts with ATP. Aspartate 18 is a Mg(2+) binding site. K(+) is bound at residue glutamate 44. 2 residues coordinate L-methionine: glutamate 57 and glutamine 100. Positions 100 to 110 (QSSDIAQGVDR) are flexible loop. ATP is bound by residues 165-167 (DAK), aspartate 242, 248-249 (RK), alanine 265, and lysine 269. Aspartate 242 is a binding site for L-methionine. Residue lysine 273 participates in L-methionine binding.

The protein belongs to the AdoMet synthase family. Homotetramer; dimer of dimers. Requires Mg(2+) as cofactor. The cofactor is K(+).

It localises to the cytoplasm. It carries out the reaction L-methionine + ATP + H2O = S-adenosyl-L-methionine + phosphate + diphosphate. It functions in the pathway amino-acid biosynthesis; S-adenosyl-L-methionine biosynthesis; S-adenosyl-L-methionine from L-methionine: step 1/1. Its function is as follows. Catalyzes the formation of S-adenosylmethionine (AdoMet) from methionine and ATP. The overall synthetic reaction is composed of two sequential steps, AdoMet formation and the subsequent tripolyphosphate hydrolysis which occurs prior to release of AdoMet from the enzyme. This chain is S-adenosylmethionine synthase, found in Nitrosococcus oceani (strain ATCC 19707 / BCRC 17464 / JCM 30415 / NCIMB 11848 / C-107).